The chain runs to 382 residues: Palmitoyltransferase ZDHHC16B (382 aa).

At 1–75 (MRSWRWSVSR…IYWLVDNMTR (75 aa)) the chain is on the cytoplasmic side. Residues 76–96 (WFGVVFVCLVMALTSSVVVIV) traverse the membrane as a helical segment. Residues 97–107 (YLCVLPIIFSS) are Lumenal-facing. A helical transmembrane segment spans residues 108–130 (YPVYWILWHLCYGHWNLLMVVFH). The Cytoplasmic segment spans residues 131–196 (YYKATTTQPG…NNCVGHFNHR (66 aa)). In terms of domain architecture, DHHC spans 153–203 (TICKKCIVPKPARTHHCSICNRCILKMDHHCPWLNNCVGHFNHRYFFSFCL). The active-site S-palmitoyl cysteine intermediate is the C183. The chain crosses the membrane as a helical span at residues 197–217 (YFFSFCLFMTMGCVYCSISAK). Residues 218–275 (DMFLDAYNAIESGRYKGGASQGEAVPGAGLIYISFQHQSSYQTPPPAFTHQERMVHKS) lie on the Lumenal side of the membrane. A helical transmembrane segment spans residues 276–296 (LVYLWVLTSSVAVALGALTLW). Over 297 to 382 (HAILITRGET…PAYKSSTTAI (86 aa)) the chain is Cytoplasmic.

Belongs to the DHHC palmitoyltransferase family.

It is found in the endoplasmic reticulum membrane. The catalysed reaction is L-cysteinyl-[protein] + hexadecanoyl-CoA = S-hexadecanoyl-L-cysteinyl-[protein] + CoA. Functionally, palmitoyl acyltransferase that mediates palmitoylation of proteins and is required during embryonic heart development. Involved in the proliferation of neural stem cells by regulating the FGF/ERK pathway. This chain is Palmitoyltransferase ZDHHC16B, found in Danio rerio (Zebrafish).